The primary structure comprises 428 residues: Histidinol dehydrogenase (428 aa).

Positions 234, 256, and 259 each coordinate substrate. 2 residues coordinate Zn(2+): Gln-256 and His-259. Catalysis depends on proton acceptor residues Glu-323 and His-324. His-324, Asp-357, Glu-411, and His-416 together coordinate substrate. Asp-357 lines the Zn(2+) pocket. Position 416 (His-416) interacts with Zn(2+).

It belongs to the histidinol dehydrogenase family. Requires Zn(2+) as cofactor.

It catalyses the reaction L-histidinol + 2 NAD(+) + H2O = L-histidine + 2 NADH + 3 H(+). It functions in the pathway amino-acid biosynthesis; L-histidine biosynthesis; L-histidine from 5-phospho-alpha-D-ribose 1-diphosphate: step 9/9. In terms of biological role, catalyzes the sequential NAD-dependent oxidations of L-histidinol to L-histidinaldehyde and then to L-histidine. The polypeptide is Histidinol dehydrogenase (Campylobacter jejuni subsp. jejuni serotype O:2 (strain ATCC 700819 / NCTC 11168)).